We begin with the raw amino-acid sequence, 429 residues long: Serine hydroxymethyltransferase (429 aa).

Residue 120-122 (GHI) participates in (6S)-5,6,7,8-tetrahydrofolate binding. At K226 the chain carries N6-(pyridoxal phosphate)lysine.

The protein belongs to the SHMT family. In terms of assembly, homodimer. The cofactor is pyridoxal 5'-phosphate.

It localises to the cytoplasm. It participates in amino-acid biosynthesis; glycine biosynthesis; glycine from L-serine: step 1/1. Its function is as follows. Catalyzes the reversible interconversion of serine and glycine with a modified folate serving as the one-carbon carrier. Also exhibits a pteridine-independent aldolase activity toward beta-hydroxyamino acids, producing glycine and aldehydes, via a retro-aldol mechanism. This is Serine hydroxymethyltransferase from Pyrobaculum arsenaticum (strain DSM 13514 / JCM 11321 / PZ6).